Here is a 619-residue protein sequence, read N- to C-terminus: Xyloglucan galactosyltransferase MUR3 (619 aa).

Positions 1-26 are disordered; sequence MFPRVSMRRRSAEVSPTEPMEKGNGK. Over 1-33 the chain is Cytoplasmic; the sequence is MFPRVSMRRRSAEVSPTEPMEKGNGKNQTNRIC. A helical; Signal-anchor for type II membrane protein membrane pass occupies residues 34 to 54; the sequence is LLVALSLFFWALLLYFHFVVL. Residues 55 to 619 are Lumenal-facing; it reads GTSNIDKQLQ…WKSEQRDKTQ (565 aa). N-linked (GlcNAc...) asparagine glycosylation is found at N116, N146, N231, N257, N319, N465, and N482. Positions 576–619 are disordered; it reads HVWDPFFSKPKPGEDGSSDGNGGTTISADAAKNSWKSEQRDKTQ. The span at 610 to 619 shows a compositional bias: basic and acidic residues; that stretch reads WKSEQRDKTQ.

The protein belongs to the glycosyltransferase 47 family. Interacts with CSLC4 and FUT1. Ubiquitous.

It localises to the golgi apparatus. Its subcellular location is the golgi stack membrane. It is found in the golgi apparatus membrane. Involved in the attachment of the Gal residue on the third xylosyl unit within the XXXG core structure of xyloglucan, the principal glycan that interlaces the cellulose microfibrils in plant cell wall. Associates with other xyloglucan-synthesizing enzymes to form multiprotein complexes for xyloglucan synthesis in the Golgi. Interacts with actin and is required for the proper endomembrane organization and for the cell elongation. Not involved in the trafficking from the endoplasmic reticulum to the vacuoles. Involved in salt stress tolerance. Participates in the control of the expression of genes encoding for proteins involved in reactive oxygen species (ROS) detoxification under salt stress. May contribute to the maintenance of the proper organization of actin microfilaments during salt stress-induced ROS production. This chain is Xyloglucan galactosyltransferase MUR3, found in Arabidopsis thaliana (Mouse-ear cress).